The primary structure comprises 471 residues: 5-hydroxytryptamine receptor 2A (471 aa).

Residues 1–80 lie on the Extracellular side of the membrane; sequence MDILCEENTS…LQEKNWSALL (80 aa). 5 N-linked (GlcNAc...) asparagine glycosylation sites follow: Asn-8, Asn-38, Asn-44, Asn-51, and Asn-54. A helical membrane pass occupies residues 81–97; sequence TAVVIILTIAGNILVIM. Residues 98–111 lie on the Cytoplasmic side of the membrane; sequence AVSLEKKLQNATNY. The chain crosses the membrane as a helical span at residues 112–137; sequence FLMSLAIADMLLGFLVMPVSMLTILY. The Extracellular segment spans residues 138 to 146; sequence GYRWPLPSK. Residues 147–171 form a helical membrane-spanning segment; it reads LCAVWIYLDVLFSTASIMHLCAISL. An intrachain disulfide couples Cys-148 to Cys-227. Asp-155 provides a ligand contact to serotonin. The DRY motif; important for ligand-induced conformation changes signature appears at 172-174; that stretch reads DRY. Over 172-191 the chain is Cytoplasmic; sequence DRYVAIQNPIHHSRFNSRTK. Residues 192-215 form a helical membrane-spanning segment; the sequence is AFLKIIAVWTISVGISMPIPVFGL. The Extracellular portion of the chain corresponds to 216–232; it reads QDDSKVFKEGSCLLADD. Residues 233–258 traverse the membrane as a helical segment; sequence NFVLIGSFVSFFIPLTIMVITYFLTI. Residues 259-322 are Cytoplasmic-facing; that stretch reads KSLQKEATLC…QSISNEQKAC (64 aa). Position 280 is a phosphoserine (Ser-280). A helical transmembrane segment spans residues 323 to 348; it reads KVLGIVFFLFVVMWCPFFITNIMAVI. Asn-343 contacts serotonin. An intrachain disulfide couples Cys-349 to Cys-353. Residues 349 to 356 are Extracellular-facing; sequence CKESCNED. A helical membrane pass occupies residues 357–382; it reads VIGALLNVFVWIGYLSSAVNPLVYTL. The short motif at 376-380 is the NPxxY motif; important for ligand-induced conformation changes and signaling element; it reads NPLVY. Over 383–471 the chain is Cytoplasmic; it reads FNKTYRSAFS…DGVNEKVSCV (89 aa). Residues 451–465 show a composition bias toward basic and acidic residues; the sequence is QHSEEASKDNSDGVN. Positions 451 to 471 are disordered; sequence QHSEEASKDNSDGVNEKVSCV. Residues 469 to 471 carry the PDZ-binding motif; it reads SCV.

It belongs to the G-protein coupled receptor 1 family. As to quaternary structure, interacts (via C-terminus) with MPDZ and PATJ. May interact (via C-terminus) with MPP3, PRDX6, DLG4, DLG1, CASK, APBA1 and MAGI2. Interacts with GRM2 and DRD2; this may affect signaling. Detected in brain cortex (at protein level). Detected in blood platelets.

The protein localises to the cell membrane. Its subcellular location is the cell projection. It localises to the dendrite. It is found in the axon. The protein resides in the cytoplasmic vesicle. The protein localises to the membrane. Its subcellular location is the caveola. It localises to the presynapse. G-protein coupled receptor activity is regulated by lipids: oleamide increases HTR2A-mediated activity. Inhibited by IHCH-7179 small molecule: IHCH-7179 acts both as an agonist activator for HTR1A and as an antagonist inhibitor for HTR2A. In terms of biological role, G-protein coupled receptor for 5-hydroxytryptamine (serotonin). Also functions as a receptor for various drugs and psychoactive substances, including mescaline, psilocybin, 1-(2,5-dimethoxy-4-iodophenyl)-2-aminopropane (DOI) and lysergic acid diethylamide (LSD). Ligand binding causes a conformation change that triggers signaling via guanine nucleotide-binding proteins (G proteins) and modulates the activity of downstream effectors. HTR2A is coupled to G(q)/G(11) G alpha proteins and activates phospholipase C-beta, releasing diacylglycerol (DAG) and inositol 1,4,5-trisphosphate (IP3) second messengers that modulate the activity of phosphatidylinositol 3-kinase and promote the release of Ca(2+) ions from intracellular stores, respectively. Beta-arrestin family members inhibit signaling via G proteins and mediate activation of alternative signaling pathways. Affects neural activity, perception, cognition and mood. Plays a role in the regulation of behavior, including responses to anxiogenic situations and psychoactive substances. Plays a role in intestinal smooth muscle contraction, and may play a role in arterial vasoconstriction. (Microbial infection) Acts as a receptor for human JC polyomavirus/JCPyV. This chain is 5-hydroxytryptamine receptor 2A, found in Homo sapiens (Human).